The primary structure comprises 1218 residues: Probable cation-transporting ATPase 13A5 (1218 aa).

4 consecutive transmembrane segments (helical) span residues 33–53, 222–242, 401–421, and 433–453; these read KAFC…VFYW, GYIE…VLSV, FIVF…GVYM, and MALI…LTIG. Asp486 serves as the catalytic 4-aspartylphosphate intermediate. 3 N-linked (GlcNAc...) asparagine glycosylation sites follow: Asn540, Asn669, and Asn819. Positions 850 and 854 each coordinate Mg(2+). Helical transmembrane passes span 903-923, 940-956, 973-993, 1042-1062, 1077-1097, and 1115-1135; these read FGVF…ALLL, VAIT…THAY, LLLS…SAFL, FETT…AFIF, IFSF…FSDF, and VLIL…EDSI.

It belongs to the cation transport ATPase (P-type) (TC 3.A.3) family. Type V subfamily.

It is found in the membrane. The catalysed reaction is ATP + H2O = ADP + phosphate + H(+). The sequence is that of Probable cation-transporting ATPase 13A5 (ATP13A5) from Homo sapiens (Human).